An 878-amino-acid polypeptide reads, in one-letter code: Phosphoenolpyruvate carboxylase (878 aa).

Active-site residues include His140 and Lys545.

The protein belongs to the PEPCase type 1 family. Requires Mg(2+) as cofactor.

The enzyme catalyses oxaloacetate + phosphate = phosphoenolpyruvate + hydrogencarbonate. Its function is as follows. Forms oxaloacetate, a four-carbon dicarboxylic acid source for the tricarboxylic acid cycle. The protein is Phosphoenolpyruvate carboxylase of Pseudomonas aeruginosa (strain ATCC 15692 / DSM 22644 / CIP 104116 / JCM 14847 / LMG 12228 / 1C / PRS 101 / PAO1).